The following is a 134-amino-acid chain: Small ribosomal subunit protein uS9 (134 aa).

The segment at 109–134 (DARRTEPHKPSKSSKGPRAKRQKSYR) is disordered. The span at 118–134 (PSKSSKGPRAKRQKSYR) shows a compositional bias: basic residues.

The protein belongs to the universal ribosomal protein uS9 family.

The chain is Small ribosomal subunit protein uS9 from Methanococcus maripaludis (strain C5 / ATCC BAA-1333).